A 385-amino-acid polypeptide reads, in one-letter code: MDCNNGCSAEGTGEGGSKEPVETFKAEDLIITRATILKEKPDPSTLVFGTVFTDHMLTVEWSLELGWEKPRIKPLQNLSLHPGSSALHYAVELFEGLKAFRGVDNKIRLFRPNLNMDRMYRSAMRATLPAFDKKELLECIQQLVKLDEEWVPYSTSASLYIRPTFIGTEPSLGVKKPTKALLFVILSPVGPYFSSGSFNPVSLWANPKYVRAWKGGTGDCKMGGNYGSSLFAQCEAVENACQQVLWLYGEENQITEVGTMNLFLYWINEDGEEELATPPLDGIILPGVMRQSILDLAHKWGEFKVSERYLTMDDLTTAVEENRVREMFGSGTACVVCPVSTILYKDETIHIPTMENGPKLASRILEKLTDIQYGREESDWTITVA.

Residue lysine 221 is modified to N6-(pyridoxal phosphate)lysine.

This sequence belongs to the class-IV pyridoxal-phosphate-dependent aminotransferase family. Homodimer. Requires pyridoxal 5'-phosphate as cofactor. Expressed in muscles.

It is found in the cytoplasm. It catalyses the reaction L-leucine + 2-oxoglutarate = 4-methyl-2-oxopentanoate + L-glutamate. The enzyme catalyses L-isoleucine + 2-oxoglutarate = (S)-3-methyl-2-oxopentanoate + L-glutamate. It carries out the reaction L-valine + 2-oxoglutarate = 3-methyl-2-oxobutanoate + L-glutamate. Functionally, catalyzes the first reaction in the catabolism of the essential branched chain amino acids leucine, isoleucine, and valine. The polypeptide is Branched-chain-amino-acid aminotransferase, cytosolic (BCAT1) (Ovis aries (Sheep)).